A 200-amino-acid polypeptide reads, in one-letter code: V-type proton ATPase subunit E (200 aa).

Belongs to the V-ATPase E subunit family.

Produces ATP from ADP in the presence of a proton gradient across the membrane. The protein is V-type proton ATPase subunit E of Thermoanaerobacter pseudethanolicus (strain ATCC 33223 / 39E) (Clostridium thermohydrosulfuricum).